Here is a 91-residue protein sequence, read N- to C-terminus: Small ribosomal subunit protein bS18 (91 aa).

This sequence belongs to the bacterial ribosomal protein bS18 family. In terms of assembly, part of the 30S ribosomal subunit. Forms a tight heterodimer with protein bS6.

Functionally, binds as a heterodimer with protein bS6 to the central domain of the 16S rRNA, where it helps stabilize the platform of the 30S subunit. This is Small ribosomal subunit protein bS18 from Paraburkholderia phymatum (strain DSM 17167 / CIP 108236 / LMG 21445 / STM815) (Burkholderia phymatum).